A 443-amino-acid chain; its full sequence is UDP-N-acetylmuramate--L-alanine ligase (443 aa).

Residue 110–116 (GAHGKTS) coordinates ATP.

Belongs to the MurCDEF family.

Its subcellular location is the cytoplasm. The catalysed reaction is UDP-N-acetyl-alpha-D-muramate + L-alanine + ATP = UDP-N-acetyl-alpha-D-muramoyl-L-alanine + ADP + phosphate + H(+). It functions in the pathway cell wall biogenesis; peptidoglycan biosynthesis. In terms of biological role, cell wall formation. In Streptococcus agalactiae serotype Ia (strain ATCC 27591 / A909 / CDC SS700), this protein is UDP-N-acetylmuramate--L-alanine ligase.